The primary structure comprises 930 residues: Isoleucine--tRNA ligase (930 aa).

Residues 57–67 carry the 'HIGH' region motif; sequence PYANGNIHVGH. An L-isoleucyl-5'-AMP-binding site is contributed by Glu554. The 'KMSKS' region motif lies at 595–599; sequence KMSKS. Position 598 (Lys598) interacts with ATP.

This sequence belongs to the class-I aminoacyl-tRNA synthetase family. IleS type 1 subfamily. As to quaternary structure, monomer.

The protein resides in the cytoplasm. The enzyme catalyses tRNA(Ile) + L-isoleucine + ATP = L-isoleucyl-tRNA(Ile) + AMP + diphosphate. Its function is as follows. Catalyzes the attachment of isoleucine to tRNA(Ile). As IleRS can inadvertently accommodate and process structurally similar amino acids such as valine, to avoid such errors it has two additional distinct tRNA(Ile)-dependent editing activities. One activity is designated as 'pretransfer' editing and involves the hydrolysis of activated Val-AMP. The other activity is designated 'posttransfer' editing and involves deacylation of mischarged Val-tRNA(Ile). The polypeptide is Isoleucine--tRNA ligase (Streptococcus agalactiae serotype III (strain NEM316)).